The chain runs to 189 residues: UPF0301 protein Plut_0637 (189 aa).

This sequence belongs to the UPF0301 (AlgH) family.

This is UPF0301 protein Plut_0637 from Chlorobium luteolum (strain DSM 273 / BCRC 81028 / 2530) (Pelodictyon luteolum).